We begin with the raw amino-acid sequence, 351 residues long: Holliday junction branch migration complex subunit RuvB (351 aa).

The segment at 1–189 (MTAHDADWSD…FGFTAHMDFY (189 aa)) is large ATPase domain (RuvB-L). ATP contacts are provided by residues leucine 28, arginine 29, glycine 70, lysine 73, threonine 74, serine 75, 136 to 138 (EDF), arginine 179, tyrosine 189, and arginine 226. Threonine 74 provides a ligand contact to Mg(2+). Residues 190–260 (EPAELQQVLA…VAKAALAVYD (71 aa)) form a small ATPAse domain (RuvB-S) region. A head domain (RuvB-H) region spans residues 263–351 (ELGLDRLDRA…AGLGQPGLFD (89 aa)). DNA contacts are provided by arginine 318 and arginine 323.

This sequence belongs to the RuvB family. Homohexamer. Forms an RuvA(8)-RuvB(12)-Holliday junction (HJ) complex. HJ DNA is sandwiched between 2 RuvA tetramers; dsDNA enters through RuvA and exits via RuvB. An RuvB hexamer assembles on each DNA strand where it exits the tetramer. Each RuvB hexamer is contacted by two RuvA subunits (via domain III) on 2 adjacent RuvB subunits; this complex drives branch migration. In the full resolvosome a probable DNA-RuvA(4)-RuvB(12)-RuvC(2) complex forms which resolves the HJ.

It is found in the cytoplasm. The enzyme catalyses ATP + H2O = ADP + phosphate + H(+). In terms of biological role, the RuvA-RuvB-RuvC complex processes Holliday junction (HJ) DNA during genetic recombination and DNA repair, while the RuvA-RuvB complex plays an important role in the rescue of blocked DNA replication forks via replication fork reversal (RFR). RuvA specifically binds to HJ cruciform DNA, conferring on it an open structure. The RuvB hexamer acts as an ATP-dependent pump, pulling dsDNA into and through the RuvAB complex. RuvB forms 2 homohexamers on either side of HJ DNA bound by 1 or 2 RuvA tetramers; 4 subunits per hexamer contact DNA at a time. Coordinated motions by a converter formed by DNA-disengaged RuvB subunits stimulates ATP hydrolysis and nucleotide exchange. Immobilization of the converter enables RuvB to convert the ATP-contained energy into a lever motion, pulling 2 nucleotides of DNA out of the RuvA tetramer per ATP hydrolyzed, thus driving DNA branch migration. The RuvB motors rotate together with the DNA substrate, which together with the progressing nucleotide cycle form the mechanistic basis for DNA recombination by continuous HJ branch migration. Branch migration allows RuvC to scan DNA until it finds its consensus sequence, where it cleaves and resolves cruciform DNA. This Mycobacterium avium (strain 104) protein is Holliday junction branch migration complex subunit RuvB.